The following is a 364-amino-acid chain: Geissoschizine synthase (364 aa).

Cys51 contacts Zn(2+). Asn52 is an NADP(+) binding site. Zn(2+) is bound by residues His73, Glu74, Cys104, Cys107, Cys110, Cys118, and Cys168. Leu194, Gly196, Leu197, Ser216, Thr217, Ser218, Lys221, Arg261, Val280, Ala282, Ser304, Thr306, and Arg351 together coordinate NADP(+).

Belongs to the zinc-containing alcohol dehydrogenase family. Class-III subfamily. As to quaternary structure, homodimer. Zn(2+) serves as cofactor. In terms of tissue distribution, expressed in leaf epidermis.

The enzyme catalyses (19E)-geissoschizine + NADP(+) = 4,21-dehydrogeissoschizine + NADPH. It participates in alkaloid biosynthesis. Its function is as follows. Component of the seco-iridoid and derivatives monoterpenoid indole alkaloids (MIAs, e.g. catharanthine, tabersonine, vincadifformine, vindoline, vincristine, quinine and strychnine) biosynthesis pathway. During the conversion of strictosidine aglycone to geissoschizine, catalyzes iminium reduction on 4,21-dehydrogeissoschizine to produce 19E-geissoschizine, precursor of catharanthine and tabersonine derivatives. May also trigger the production of reactive intermediate used by the HL1, HL2, HL3 and HL4 to form catharanthine, vincadifformine and tabersonine. This chain is Geissoschizine synthase, found in Catharanthus roseus (Madagascar periwinkle).